A 1442-amino-acid polypeptide reads, in one-letter code: ABC transporter G family member 35 (1442 aa).

The 274-residue stretch at 169–442 (LGMIGIRLAK…FESFGFKCPE (274 aa)) folds into the ABC transporter 1 domain. Residue 202-209 (GPPSSGKT) coordinates ATP. Residues 520–733 (ELLKSCWDKE…AFNAITVNEL (214 aa)) form the ABC transmembrane type-2 1 domain. 7 consecutive transmembrane segments (helical) span residues 538-558 (FFYV…STLY), 573-593 (IYVG…LAEM), 619-639 (LPTF…WMVV), 657-677 (FLII…IAST), 683-703 (IANT…GFLL), 714-734 (WAYW…NELF), and 769-789 (IGVG…TLAL). Positions 840–1092 (MSFDDVKYFV…KVVEYFESFP (253 aa)) constitute an ABC transporter 2 domain. ATP is bound at residue 885 to 892 (GVSGAGKT). The region spanning 1165–1379 (GQFKSCLWKQ…TIYGLITSQY (215 aa)) is the ABC transmembrane type-2 2 domain. The next 7 helical transmembrane spans lie at 1186–1206 (LVRF…FWQI), 1218–1238 (MVIG…CSTV), 1272–1292 (LPYV…MVGF), 1299–1319 (FLWF…YGMM), 1329–1349 (VASI…GFFI), 1357–1377 (WWVW…LITS), and 1414–1434 (PVAG…AFCI).

This sequence belongs to the ABC transporter superfamily. ABCG family. PDR (TC 3.A.1.205) subfamily. In terms of tissue distribution, ubiquitous with higher levels in roots.

The protein resides in the membrane. Its function is as follows. May be a general defense protein. This is ABC transporter G family member 35 (ABCG35) from Arabidopsis thaliana (Mouse-ear cress).